We begin with the raw amino-acid sequence, 414 residues long: Serine/threonine transporter SstT (414 aa).

8 consecutive transmembrane segments (helical) span residues 16 to 36, 46 to 66, 84 to 104, 143 to 163, 180 to 200, 219 to 239, 300 to 320, and 332 to 352; these read GSLVKQILVGLVLGILLAWIS, LGTLFVGALKAVAPVLVLMLV, ILFLYLLGTFSAALAAVVFSF, ALLNANYIGILVWAVGLGFAL, AVTFMVKLVIRFAPVGIFGLV, LVVLIGCMLLVALMVNPLLVF, MAGAAITITVLTLAAVHTLGV, and VVASLCACGASGVAGGSLLLI.

This sequence belongs to the dicarboxylate/amino acid:cation symporter (DAACS) (TC 2.A.23) family.

It localises to the cell inner membrane. The catalysed reaction is L-serine(in) + Na(+)(in) = L-serine(out) + Na(+)(out). It carries out the reaction L-threonine(in) + Na(+)(in) = L-threonine(out) + Na(+)(out). Its function is as follows. Involved in the import of serine and threonine into the cell, with the concomitant import of sodium (symport system). In Salmonella heidelberg (strain SL476), this protein is Serine/threonine transporter SstT.